Consider the following 104-residue polypeptide: UPF0235 protein RBE_0633 (104 aa).

Belongs to the UPF0235 family.

This chain is UPF0235 protein RBE_0633, found in Rickettsia bellii (strain RML369-C).